Reading from the N-terminus, the 492-residue chain is E3 ubiquitin-protein ligase ARIH2 (492 aa).

The segment covering 1 to 11 has biased composition (polar residues); the sequence is MSVDMNSQGSD. Residues 1 to 37 are disordered; it reads MSVDMNSQGSDSNEEDYDPNCEEEEEEEEDPGDIEDY. Acidic residues predominate over residues 12–36; it reads SNEEDYDPNCEEEEEEEEDPGDIED. The UBA-like stretch occupies residues 64–111; that stretch reads TYKESEGALHEHMTSLASVLKVSHSVAKLILVNFHWQVSEILDRYRSN. The TRIAD supradomain stretch occupies residues 134–343; that stretch reads PPHHCAVCMQ…SEYYECSRYK (210 aa). Positions 138, 141, 155, 157, 160, 163, 182, 187, 227, 232, 248, 251, 256, 259, 264, 269, 296, and 299 each coordinate Zn(2+). An RING-type 1 zinc finger spans residues 138–187; that stretch reads CAVCMQFVRKENLLSLACQHQFCRSCWEQHCSVLVKDGVGVGISCMAQDC. An IBR-type zinc finger spans residues 207–269; sequence DKYRRYLFRD…RQMYHAPTDC (63 aa). The segment at 296–325 adopts an RING-type 2; atypical zinc-finger fold; sequence CPKCNICIEKNGGCNHMQCSKCKHDFCWMC. Cysteine 309 is an active-site residue. Zn(2+) contacts are provided by cysteine 314, cysteine 317, cysteine 322, cysteine 325, histidine 332, and cysteine 339. Position 352 is a phosphoserine (serine 352). An ariadne domain region spans residues 358 to 492; the sequence is REALKKYLFY…RTLLKDFHDT (135 aa).

It belongs to the RBR family. Ariadne subfamily. Interacts (via RING-type zinc finger 1) with UBE2L3. Interacts (via RING-type zinc finger 2) with UBE2N. Interacts with neddylated CUL5. Interacts (via RING-type 2) with GFI1B. Interacts with GFI1; prevents its ubiquitination and proteasomal degradation. Interacts with DCUN1D1 (via UBA-like domain); promotes DCUN1D1 ubiquitination. Ubiquitinated. Ubiquitination promotes proteasomal degradation.

Its subcellular location is the nucleus. The protein localises to the cytoplasm. The enzyme catalyses [E2 ubiquitin-conjugating enzyme]-S-ubiquitinyl-L-cysteine + [acceptor protein]-L-lysine = [E2 ubiquitin-conjugating enzyme]-L-cysteine + [acceptor protein]-N(6)-ubiquitinyl-L-lysine.. It functions in the pathway protein modification; protein ubiquitination. With respect to regulation, autoinhibited by the ariadne domain, which masks the second RING-type zinc finger that contains the active site and inhibits the E3 activity. Inhibition is relieved upon binding to neddylated cullin-RING ubiquitin ligase complexes, which activate the E3 ligase activity of ARIH1. Its function is as follows. E3 ubiquitin-protein ligase, which catalyzes ubiquitination of target proteins together with ubiquitin-conjugating enzyme E2 UBE2L3. Acts as an atypical E3 ubiquitin-protein ligase by working together with cullin-5-RING ubiquitin ligase complex (ECS complex, also named CRL5 complex) and initiating ubiquitination of ECS substrates: associates with ECS complex and specifically mediates addition of the first ubiquitin on ECS targets. The initial ubiquitin is then elongated. E3 ubiquitin-protein ligase activity is activated upon binding to neddylated form of the ECS complex. Mediates 'Lys-6', 'Lys-48'- and 'Lys-63'-linked polyubiquitination. May play a role in myelopoiesis. The polypeptide is E3 ubiquitin-protein ligase ARIH2 (Arih2) (Mus musculus (Mouse)).